The chain runs to 1118 residues: Carbamoyl phosphate synthase arginine-specific large chain (1118 aa).

Residues 23-420 (QLVEGVNSVL…AFQKALRQVD (398 aa)) form a carboxyphosphate synthetic domain region. Arginine 150, arginine 190, glycine 196, glycine 197, lysine 227, leucine 229, glutamate 234, glycine 260, valine 261, histidine 262, glutamine 303, and glutamate 317 together coordinate ATP. One can recognise an ATP-grasp 1 domain in the interval 154 to 346 (ASALKDINIP…LAYTAAKIGL (193 aa)). Mg(2+) contacts are provided by glutamine 303, glutamate 317, and asparagine 319. Mn(2+) contacts are provided by glutamine 303, glutamate 317, and asparagine 319. The tract at residues 421-573 (PSLLGFQGST…YTTYNATKND (153 aa)) is oligomerization domain. The tract at residues 574 to 958 (VEFNENGMLV…SYWTAIQSTM (385 aa)) is carbamoyl phosphate synthetic domain. The ATP-grasp 2 domain maps to 698 to 890 (SSILDSIDVD…FIEIAVKAFL (193 aa)). Residues arginine 734, lysine 773, isoleucine 775, glutamate 780, glycine 805, valine 806, histidine 807, serine 808, glutamine 848, and glutamate 861 each contribute to the ATP site. Residues glutamine 848, glutamate 861, and asparagine 863 each coordinate Mg(2+). Mn(2+) contacts are provided by glutamine 848, glutamate 861, and asparagine 863. Residues 959–1102 (NFHVPLPPSG…KILESHDVIV (144 aa)) are allosteric domain. Positions 960–1118 (FHVPLPPSGI…WDEFIGFKAY (159 aa)) constitute an MGS-like domain.

The protein belongs to the CarB family. Heterodimer composed of 2 chains; the small (or glutamine) chain promotes the hydrolysis of glutamine to ammonia, which is used by the large (or ammonia) chain to synthesize carbamoyl phosphate. The cofactor is Mg(2+). Requires Mn(2+) as cofactor.

The protein localises to the cytoplasm. It carries out the reaction hydrogencarbonate + L-glutamine + 2 ATP + H2O = carbamoyl phosphate + L-glutamate + 2 ADP + phosphate + 2 H(+). The enzyme catalyses hydrogencarbonate + NH4(+) + 2 ATP = carbamoyl phosphate + 2 ADP + phosphate + 2 H(+). It participates in amino-acid biosynthesis; L-arginine biosynthesis; carbamoyl phosphate from bicarbonate: step 1/1. Its function is as follows. Large subunit of the arginine-specific carbamoyl phosphate synthase (CPSase). CPSase catalyzes the formation of carbamoyl phosphate from the ammonia moiety of glutamine, hydrogencarbonate, and phosphate donated by ATP, constituting the first step of 2 biosynthetic pathways, one leading to arginine and/or urea and the other to pyrimidine nucleotides. The large subunit (synthetase) binds the substrates ammonia (free or transferred from glutamine from the small subunit), hydrogencarbonate and ATP and carries out an ATP-coupled ligase reaction, activating hydrogencarbonate by forming carboxy phosphate which reacts with ammonia to form carbamoyl phosphate. This is Carbamoyl phosphate synthase arginine-specific large chain (CPA2) from Saccharomyces cerevisiae (strain ATCC 204508 / S288c) (Baker's yeast).